The primary structure comprises 217 residues: FMN-dependent NADH:quinone oxidoreductase (217 aa).

FMN-binding positions include S10 and 16 to 18 (SVS).

Belongs to the azoreductase type 1 family. As to quaternary structure, homodimer. The cofactor is FMN.

It carries out the reaction 2 a quinone + NADH + H(+) = 2 a 1,4-benzosemiquinone + NAD(+). The enzyme catalyses N,N-dimethyl-1,4-phenylenediamine + anthranilate + 2 NAD(+) = 2-(4-dimethylaminophenyl)diazenylbenzoate + 2 NADH + 2 H(+). Its function is as follows. Quinone reductase that provides resistance to thiol-specific stress caused by electrophilic quinones. Functionally, also exhibits azoreductase activity. Catalyzes the reductive cleavage of the azo bond in aromatic azo compounds to the corresponding amines. The sequence is that of FMN-dependent NADH:quinone oxidoreductase from Polaromonas naphthalenivorans (strain CJ2).